We begin with the raw amino-acid sequence, 269 residues long: Putative ankyrin repeat protein L23 (269 aa).

ANK repeat units lie at residues 118–147 (EDDYAVKWASKNGHLKVVEYLVSLGADIKS), 148–177 (DGDYAVRWASENGHIDVVKYLVSQNADIRA), 179–207 (NDYAVKWASSNGHLEVVKYLVSQGANIRE), 208–237 (QNDYAIRLASQYGHLEVVKYLISLGADIRA), and 238–267 (DNDCAVRLASENGHIEIVNYLISQGADIRA).

The chain is Putative ankyrin repeat protein L23 from Acanthamoeba polyphaga (Amoeba).